A 306-amino-acid chain; its full sequence is Putative HPr kinase/phosphorylase 2 (306 aa).

Catalysis depends on residues H138 and K159. 153-160 (GESGVGKS) is an ATP binding site. S160 is a binding site for Mg(2+). The active-site Proton acceptor; for phosphorylation activity. Proton donor; for dephosphorylation activity is D177. Residues 201–210 (LALRSVGLLN) are important for the catalytic mechanism of both phosphorylation and dephosphorylation. The tract at residues 264 to 269 (QLQPGR) is important for the catalytic mechanism of dephosphorylation.

Belongs to the HPrK/P family. As to quaternary structure, homohexamer. Mg(2+) is required as a cofactor.

The catalysed reaction is [HPr protein]-L-serine + ATP = [HPr protein]-O-phospho-L-serine + ADP + H(+). It carries out the reaction [HPr protein]-O-phospho-L-serine + phosphate + H(+) = [HPr protein]-L-serine + diphosphate. In terms of biological role, catalyzes the ATP- as well as the pyrophosphate-dependent phosphorylation of a specific serine residue in HPr, a phosphocarrier protein of the phosphoenolpyruvate-dependent sugar phosphotransferase system (PTS). HprK/P also catalyzes the pyrophosphate-producing, inorganic phosphate-dependent dephosphorylation (phosphorolysis) of seryl-phosphorylated HPr (P-Ser-HPr). The two antagonistic activities of HprK/P are regulated by several intracellular metabolites, which change their concentration in response to the absence or presence of rapidly metabolisable carbon sources (glucose, fructose, etc.) in the growth medium. Also phosphorylates/dephosphorylates the HPr-like catabolite repression protein crh on a specific serine residue. Therefore, by controlling the phosphorylation state of HPr and crh, HPrK/P is a sensor enzyme that plays a major role in the regulation of carbon metabolism and sugar transport: it mediates carbon catabolite repression (CCR), and regulates PTS-catalyzed carbohydrate uptake and inducer exclusion. The polypeptide is Putative HPr kinase/phosphorylase 2 (hprK2) (Oceanobacillus iheyensis (strain DSM 14371 / CIP 107618 / JCM 11309 / KCTC 3954 / HTE831)).